We begin with the raw amino-acid sequence, 428 residues long: Histone-lysine N-methyltransferase SMYD3 (428 aa).

M1 is subject to N-acetylmethionine. Residues 4–240 (LKVEKFTTAN…AGEELTICYL (237 aa)) enclose the SET domain. 14 to 16 (RGN) is an S-adenosyl-L-methionine binding site. 8 residues coordinate Zn(2+): C49, C52, C62, C65, C71, C75, H83, and C87. The MYND-type zinc-finger motif lies at 49 to 87 (CDRCLLGKEKLMRCSQCRIAKYCSAKCQKKAWPDHRREC). Residues Y124, N132, 205-206 (NH), Y239, and F259 each bind S-adenosyl-L-methionine. Residues 272–428 (DADMLTGDEQ…EECDANIRAS (157 aa)) form a C-terminal domain; essential for histone methyltransferase activity, nuclear localization and mediates interaction with HSP90AA1 region.

This sequence belongs to the class V-like SAM-binding methyltransferase superfamily. Histone-lysine methyltransferase family. In terms of assembly, interacts with HSPCA. Interacts with HELZ. Interacts with POLR2A; the interaction may be indirect and may be mediated by HELZ. Interacts with HSP90AA1; this interaction enhances SMYD3 histone-lysine N-methyltransferase.

It localises to the cytoplasm. It is found in the nucleus. The enzyme catalyses L-lysyl(4)-[histone H3] + 3 S-adenosyl-L-methionine = N(6),N(6),N(6)-trimethyl-L-lysyl(4)-[histone H3] + 3 S-adenosyl-L-homocysteine + 3 H(+). With respect to regulation, histone methyltransferase activity strongly stimulated by HSPCA. Its function is as follows. Histone methyltransferase. Specifically methylates 'Lys-4' of histone H3, inducing di- and tri-methylation, but not monomethylation. Also methylates 'Lys-5' of histone H4. Plays an important role in transcriptional activation as a member of an RNA polymerase complex. Binds DNA containing 5'-CCCTCC-3' or 5'-GAGGGG-3' sequences. The chain is Histone-lysine N-methyltransferase SMYD3 (Smyd3) from Mus musculus (Mouse).